The primary structure comprises 314 residues: Olfactory receptor 1E2 (314 aa).

Residues 1–25 (MMGQNQTSISDFLLLGLPIQPEQQN) are Extracellular-facing. Asparagine 5 carries an N-linked (GlcNAc...) asparagine glycan. Residues 26–49 (LCYALFLAMYLTTLLGNLLIIVLI) form a helical membrane-spanning segment. The Cytoplasmic segment spans residues 50 to 57 (RLDSHLHT). The helical transmembrane segment at 58 to 79 (PMYLFLSNLSFSDLCFSSVTIP) threads the bilayer. Over 80-100 (KLLQNMQNQDPSIPYADCLTQ) the chain is Extracellular. Cysteine 97 and cysteine 189 are disulfide-bonded. A helical transmembrane segment spans residues 101 to 120 (MHFFLLFGDLESFLLVAMAY). Residues 121-139 (DRYVAICFPLHYTAIMSPM) are Cytoplasmic-facing. The helical transmembrane segment at 140–158 (LCLSVVALSWVLTTFHAML) threads the bilayer. Residues 159–196 (HTLLMARLCFCADNVIPHFFCDMSALLKLACSDTRVNE) lie on the Extracellular side of the membrane. Residues 197–219 (WVIFIMGGLIVVIPFLLILGSYA) traverse the membrane as a helical segment. Residues 220–236 (RIVSSILKVPSFKGICK) are Cytoplasmic-facing. A helical membrane pass occupies residues 237-260 (ALSTCGSHLSVVSLFYGTVIGLYL). Residues 261-272 (CPSANSSTLKDT) lie on the Extracellular side of the membrane. Asparagine 265 carries an N-linked (GlcNAc...) asparagine glycan. The helical transmembrane segment at 273 to 292 (VMAMMYTVVTPMLNPFIYSL) threads the bilayer. At 293–314 (RNRDMKGALERVICKRKNPFLL) the chain is on the cytoplasmic side.

It belongs to the G-protein coupled receptor 1 family.

It is found in the cell membrane. Its function is as follows. Odorant receptor. The sequence is that of Olfactory receptor 1E2 (OR1E2) from Pan troglodytes (Chimpanzee).